The sequence spans 245 residues: Nodulation protein G (245 aa).

11-35 (VTGASGAIGGAIARVLHAQGAIVGL) is an NAD(+) binding site. A substrate-binding site is contributed by Ser139. The active-site Proton acceptor is Tyr152.

The protein belongs to the short-chain dehydrogenases/reductases (SDR) family.

Its function is as follows. Proposed to modify Nod factor fatty acyl chain. This Rhizobium meliloti (strain 1021) (Ensifer meliloti) protein is Nodulation protein G (nodG).